Reading from the N-terminus, the 390-residue chain is LL-diaminopimelate aminotransferase 2 (390 aa).

The substrate site is built by tyrosine 13 and glycine 38. Residues tyrosine 67, 102–103 (SK), tyrosine 127, asparagine 177, tyrosine 208, and 236–238 (SLS) each bind pyridoxal 5'-phosphate. Residues lysine 103, tyrosine 127, and asparagine 177 each contribute to the substrate site. N6-(pyridoxal phosphate)lysine is present on lysine 239. Arginine 247 contacts pyridoxal 5'-phosphate. Arginine 365 lines the substrate pocket.

Belongs to the class-I pyridoxal-phosphate-dependent aminotransferase family. LL-diaminopimelate aminotransferase subfamily. As to quaternary structure, homodimer. Requires pyridoxal 5'-phosphate as cofactor.

It carries out the reaction (2S,6S)-2,6-diaminopimelate + 2-oxoglutarate = (S)-2,3,4,5-tetrahydrodipicolinate + L-glutamate + H2O + H(+). Its pathway is amino-acid biosynthesis; L-lysine biosynthesis via DAP pathway; LL-2,6-diaminopimelate from (S)-tetrahydrodipicolinate (aminotransferase route): step 1/1. Functionally, involved in the synthesis of meso-diaminopimelate (m-DAP or DL-DAP), required for both lysine and peptidoglycan biosynthesis. Catalyzes the direct conversion of tetrahydrodipicolinate to LL-diaminopimelate. The sequence is that of LL-diaminopimelate aminotransferase 2 from Nostoc sp. (strain PCC 7120 / SAG 25.82 / UTEX 2576).